The primary structure comprises 471 residues: Argininosuccinate lyase (471 aa).

It belongs to the lyase 1 family. Argininosuccinate lyase subfamily.

It localises to the cytoplasm. It catalyses the reaction 2-(N(omega)-L-arginino)succinate = fumarate + L-arginine. It participates in amino-acid biosynthesis; L-arginine biosynthesis; L-arginine from L-ornithine and carbamoyl phosphate: step 3/3. The protein is Argininosuccinate lyase of Renibacterium salmoninarum (strain ATCC 33209 / DSM 20767 / JCM 11484 / NBRC 15589 / NCIMB 2235).